Consider the following 849-residue polypeptide: Protein translocase subunit SecA (849 aa).

ATP is bound by residues Gln85, 103-107, and Asp493; that span reads GEGKT. Positions 832, 834, 843, and 844 each coordinate Zn(2+).

It belongs to the SecA family. As to quaternary structure, monomer and homodimer. Part of the essential Sec protein translocation apparatus which comprises SecA, SecYEG and auxiliary proteins SecDF. Other proteins may also be involved. Requires Zn(2+) as cofactor.

The protein resides in the cell membrane. The protein localises to the cytoplasm. The catalysed reaction is ATP + H2O + cellular proteinSide 1 = ADP + phosphate + cellular proteinSide 2.. Functionally, part of the Sec protein translocase complex. Interacts with the SecYEG preprotein conducting channel. Has a central role in coupling the hydrolysis of ATP to the transfer of proteins into and across the cell membrane, serving as an ATP-driven molecular motor driving the stepwise translocation of polypeptide chains across the membrane. In Streptococcus thermophilus (strain CNRZ 1066), this protein is Protein translocase subunit SecA.